The primary structure comprises 621 residues: MSAPTRRPAPDAPGAAGIAPAPPAPAAKPAAGKPKRIGPEQVTGAQSVIRSLEELGVEVIFGIPGGAVLPVYDPLFDSKKLRHVLVRHEQGAGHAASGYAHATGKVGVCMATSGPGATNLVTALADAQMDSIPVVAVTGQVGRTLIGTDAFQEADISGITMPITKHNFLVVRQRNPAVLAEAFHIAASGRPARCSVDIPKDVLQGQCTFSWPPRIHLPGYKPTTKPHSRQIRERAKLIAAARKPVLYVGGGVIRGEASEQLRELAELTGIPVVTTLMARGAFPDSHRQHLGMPGMHGTVAAVAALQRSDLLIALGTRFDDRVTGKLDTFAPEAKVIHADIDPAEIGKNRHADVPIVGDVKAVIAELVEILRHDGAPGNLDIADWWAYLDDVQSTYPLSYGPQSDGSLGPEYVIEKLGQIAGPDALYVAGVGHDQMWAAQFISYEKPRTWLNSGGQGTMGFAIPAAMGAKMGRPEAEVWAIDGDGCFQMTNQELATCAVEGIPIKVALINNGNLGMVRQWQTLFYEERYSQTDLGHPLAPHPDFVKLAEALGCVGLRCEREEDVVDVINAARAINDRPVVIAFIVGADAQVWPMVAAGTSNDEIQAARGIRPLFDDETEGTP.

The segment covering 1-19 (MSAPTRRPAPDAPGAAGIA) has biased composition (low complexity). Residues 1–39 (MSAPTRRPAPDAPGAAGIAPAPPAPAAKPAAGKPKRIGP) are disordered. Glu89 is a thiamine diphosphate binding site. FAD contacts are provided by residues Arg190, 296-317 (HGTV…LGTR), and 339-358 (DIDP…IVGD). The tract at residues 432 to 512 (HDQMWAAQFI…IKVALINNGN (81 aa)) is thiamine pyrophosphate binding. Residues Asp483 and Asn510 each contribute to the Mg(2+) site.

The protein belongs to the TPP enzyme family. Mg(2+) is required as a cofactor. The cofactor is thiamine diphosphate.

It carries out the reaction 2 pyruvate + H(+) = (2S)-2-acetolactate + CO2. Its pathway is amino-acid biosynthesis; L-isoleucine biosynthesis; L-isoleucine from 2-oxobutanoate: step 1/4. The protein operates within amino-acid biosynthesis; L-valine biosynthesis; L-valine from pyruvate: step 1/4. This is Acetolactate synthase (ilvB) from Mycobacterium avium.